The primary structure comprises 557 residues: Anthrax toxin receptor-like (557 aa).

Positions 1–25 are cleaved as a signal peptide; it reads MRSHGRWGPCFLLFLLLLPPPLFRA. Over 26-345 the chain is Extracellular; the sequence is GSLRYHGPGW…KSNVSVTSST (320 aa). The 171-residue stretch at 74 to 244 folds into the VWFA domain; the sequence is DLYFILDKSG…KAMRDTVDAL (171 aa). 3 residues coordinate a divalent metal cation: S82, S84, and T148. Residues 346 to 366 traverse the membrane as a helical segment; the sequence is CGIFSNWLYFLLPLLLLPLLL. Residues 367–557 lie on the Cytoplasmic side of the membrane; sequence CCLWRLCRKK…PTSKAPNTQD (191 aa). 2 disordered regions span residues 380–411 and 497–557; these read EPPP…LPPP and ESPS…NTQD. Residues 386–395 show a composition bias toward basic and acidic residues; sequence KPEKEPEQEK. Residues 396–411 show a composition bias toward pro residues; it reads PPPPPPPSPPPPLPPP. A compositionally biased stretch (polar residues) spans 534–557; the sequence is GTLQNPLCPSLPRSPTSKAPNTQD.

Belongs to the ATR family.

The protein localises to the membrane. This is Anthrax toxin receptor-like (ANTXRL) from Macaca fascicularis (Crab-eating macaque).